Here is a 209-residue protein sequence, read N- to C-terminus: MNNLSPLEVAIADFQAAKTTPELIRATKNLCDLRTIEAIPILIEGLGFNNPAVASVATSGLIELGSQAVPSLLVSLDEKNYGSRAWVVRALASIRDPRSLDLLEHALATDIAPSVRRSAARGLAELNLIYPEDRSKLERCLLALLAAIKDDEWVVRYAVIFGIELHLRRYNPNNKNHCILALKQLSSDSESIKVIRLRAKLALQRLASS.

Belongs to the CpcE/RpcE/PecE family.

An enzyme involved in the biosynthesis of bilin. Might be involved in the specific attachment of phycoerythrobilin (PEB) to the R-phycocyanin II alpha chain. The chain is Bilin biosynthesis protein RpcF (rpcF) from Synechococcus sp. (strain WH8020).